A 256-amino-acid chain; its full sequence is Short-chain dehydrogenase/reductase cdmF (256 aa).

NADP(+)-binding residues include Val-11, Asp-57, and Arg-119. Ser-137 acts as the Proton donor in catalysis. 4 residues coordinate NADP(+): Tyr-151, Lys-155, Gly-183, and Asn-187. The active-site Proton acceptor is Tyr-151. Lys-155 (lowers pKa of active site Tyr) is an active-site residue.

The protein belongs to the short-chain dehydrogenases/reductases (SDR) family.

The enzyme catalyses 3-hydroxypentacecilide A + A = chrodrimanin C + AH2. It carries out the reaction chrodrimanin F + A = chrodrimanin H + AH2. Its pathway is secondary metabolite biosynthesis; terpenoid biosynthesis. Functionally, short-chain dehydrogenase/reductase; part of the gene cluster that mediates the biosynthesis of chrodrimanin B, a meroterpenoid that acts as a potent blocker of insect GABA-gated chloride channels. The first step of the pathway is the biosynthesis of 6-hydroxymellein by the polyketide synthase cdmE. The prenyltransferase cdmH acts as a 6-hydroxymellein 5-farnesyltransferase and produces the hydrophobic metabolite verruculide C. The FAD-dependent monooxygenase cdmI further converts verruculide C into verruculide B. The terpene cyclase cdmG then produced the pentacyclic molecule 3-hydroxypentacecilide A, the backbone structure of chrodrimanin B, via folding the farnesyl moiety of the substrate into the chair-boat conformation. The short-chain dehydrogenase/reductase cdmF functions as the 3-OH dehydrogenase that oxidizes the C-3 hydroxyl group of 3-hydroxypentacecilide A and produces chrodrimanin C, the dehydrogenated product of 3-hydroxypentacecilide A. The cytochrome P450 monooxygenase cdmJ then accepts both 3-hydroxypentacecilide A and chrodrimanin C and functions as a C-7-beta-hydroxylase to produce respectively chrodrimanin H and chrodrimanin F. The dioxygenase cdmA accepts chrodrimanin H to afford chrodrimanin E, which is further transformed to chrodrimanin A by the dioxygenase cdmD. CdmA can also accept chrodrimanin C as substrate to convert it into verruculide A, which is further converted into chrodrimanin T by cdmD. The last step of the biosynthesis is proposed to be performed by the acetyltransferase cdmC which acetylates chrodrimanin A to yield chrodrimanin B. The pathway may also lead to the production of additional shunt products, including chrodrimanins T and U. The chain is Short-chain dehydrogenase/reductase cdmF from Talaromyces verruculosus (Penicillium verruculosum).